Consider the following 150-residue polypeptide: UPF0178 protein Rru_A0086 (150 aa).

It belongs to the UPF0178 family.

The polypeptide is UPF0178 protein Rru_A0086 (Rhodospirillum rubrum (strain ATCC 11170 / ATH 1.1.1 / DSM 467 / LMG 4362 / NCIMB 8255 / S1)).